The sequence spans 189 residues: GTPase NRas (189 aa).

A GTP-binding site is contributed by 10–17 (GAGGVGKS). An Effector region motif is present at residues 32–40 (YDPTIEDSY). Residues 57–61 (DTAGQ) and 116–119 (NKCD) contribute to the GTP site. The interval 166–185 (YRMKKLDSSEDNNQGCIRIP) is hypervariable region. A lipid anchor (S-palmitoyl cysteine) is attached at C181. C186 carries S-farnesyl cysteine lipidation. Positions 187–189 (KLM) are cleaved as a propeptide — removed in mature form.

The protein belongs to the small GTPase superfamily. Ras family. In terms of processing, palmitoylated by the ZDHHC9-GOLGA7 complex. Depalmitoylated by abhd17a, abhd17b and abhd17c. A continuous cycle of de- and re-palmitoylation regulates rapid exchange between plasma membrane and Golgi.

It localises to the cell membrane. Its subcellular location is the golgi apparatus membrane. It carries out the reaction GTP + H2O = GDP + phosphate + H(+). With respect to regulation, alternates between an inactive form bound to GDP and an active form bound to GTP. Activated by a guanine nucleotide-exchange factor (GEF) and inactivated by a GTPase-activating protein (GAP). In terms of biological role, ras proteins bind GDP/GTP and possess intrinsic GTPase activity. The chain is GTPase NRas (nras) from Xenopus laevis (African clawed frog).